The primary structure comprises 291 residues: BTB/POZ domain-containing protein 19 (291 aa).

The 70-residue stretch at 29-98 (SDVRFVVGQE…LYTNSAKLQR (70 aa)) folds into the BTB domain. The 101-residue stretch at 134–234 (CEALQVAVTF…LALLAPAELS (101 aa)) folds into the BACK domain.

This Bos taurus (Bovine) protein is BTB/POZ domain-containing protein 19 (BTBD19).